The following is a 718-amino-acid chain: Catalase-peroxidase (718 aa).

The segment at residues 98 to 219 is a cross-link (tryptophyl-tyrosyl-methioninium (Trp-Tyr) (with M-245)); that stretch reads WHAAGTYRMG…LAATEMGLIY (122 aa). Catalysis depends on histidine 99, which acts as the Proton acceptor. The tryptophyl-tyrosyl-methioninium (Tyr-Met) (with W-98) cross-link spans 219 to 245; it reads YVNPEGPQASGDPRSAAPFIRATFGNM. Position 260 (histidine 260) interacts with heme b.

The protein belongs to the peroxidase family. Peroxidase/catalase subfamily. As to quaternary structure, homodimer or homotetramer. The cofactor is heme b. Formation of the three residue Trp-Tyr-Met cross-link is important for the catalase, but not the peroxidase activity of the enzyme.

The catalysed reaction is H2O2 + AH2 = A + 2 H2O. The enzyme catalyses 2 H2O2 = O2 + 2 H2O. Bifunctional enzyme with both catalase and broad-spectrum peroxidase activity. This Acinetobacter baumannii (strain ACICU) protein is Catalase-peroxidase.